The chain runs to 481 residues: Glutamyl-tRNA(Gln) amidotransferase subunit A (481 aa).

Catalysis depends on charge relay system residues K76 and S151. The Acyl-ester intermediate role is filled by S175.

This sequence belongs to the amidase family. GatA subfamily. In terms of assembly, heterotrimer of A, B and C subunits.

The catalysed reaction is L-glutamyl-tRNA(Gln) + L-glutamine + ATP + H2O = L-glutaminyl-tRNA(Gln) + L-glutamate + ADP + phosphate + H(+). Allows the formation of correctly charged Gln-tRNA(Gln) through the transamidation of misacylated Glu-tRNA(Gln) in organisms which lack glutaminyl-tRNA synthetase. The reaction takes place in the presence of glutamine and ATP through an activated gamma-phospho-Glu-tRNA(Gln). The protein is Glutamyl-tRNA(Gln) amidotransferase subunit A of Neisseria meningitidis serogroup B (strain ATCC BAA-335 / MC58).